Reading from the N-terminus, the 725-residue chain is Catalase-peroxidase (725 aa).

The segment at 1–20 (MSSEAKCPFPHAANRSRSNQ) is disordered. The tryptophyl-tyrosyl-methioninium (Trp-Tyr) (with M-241) cross-link spans 91–215 (WHATGTYRTM…LSATHMGLIY (125 aa)). Residue His-92 is the Proton acceptor of the active site. A cross-link (tryptophyl-tyrosyl-methioninium (Tyr-Met) (with W-91)) is located at residues 215–241 (YVNPEGPDGSGDYMAAAKDIRATFYRM). His-256 is a heme b binding site.

It belongs to the peroxidase family. Peroxidase/catalase subfamily. In terms of assembly, homodimer or homotetramer. It depends on heme b as a cofactor. Formation of the three residue Trp-Tyr-Met cross-link is important for the catalase, but not the peroxidase activity of the enzyme.

The catalysed reaction is H2O2 + AH2 = A + 2 H2O. It carries out the reaction 2 H2O2 = O2 + 2 H2O. Bifunctional enzyme with both catalase and broad-spectrum peroxidase activity. This is Catalase-peroxidase from Janthinobacterium sp. (strain Marseille) (Minibacterium massiliensis).